A 703-amino-acid polypeptide reads, in one-letter code: Phosphoribosylformylglycinamidine synthase subunit PurL (703 aa).

Histidine 36 is a catalytic residue. Positions 39 and 80 each coordinate ATP. Glutamate 82 serves as a coordination point for Mg(2+). Substrate is bound by residues 83-86 and arginine 105; that span reads SHNH. Residue histidine 84 is the Proton acceptor of the active site. Aspartate 106 lines the Mg(2+) pocket. Glutamine 226 is a substrate binding site. Mg(2+) is bound at residue aspartate 252. 294–296 serves as a coordination point for substrate; sequence ETQ. Residues aspartate 468 and glycine 505 each contribute to the ATP site. Serine 508 is a substrate binding site.

This sequence belongs to the FGAMS family. Monomer. Part of the FGAM synthase complex composed of 1 PurL, 1 PurQ and 2 PurS subunits.

The protein localises to the cytoplasm. The catalysed reaction is N(2)-formyl-N(1)-(5-phospho-beta-D-ribosyl)glycinamide + L-glutamine + ATP + H2O = 2-formamido-N(1)-(5-O-phospho-beta-D-ribosyl)acetamidine + L-glutamate + ADP + phosphate + H(+). The protein operates within purine metabolism; IMP biosynthesis via de novo pathway; 5-amino-1-(5-phospho-D-ribosyl)imidazole from N(2)-formyl-N(1)-(5-phospho-D-ribosyl)glycinamide: step 1/2. Part of the phosphoribosylformylglycinamidine synthase complex involved in the purines biosynthetic pathway. Catalyzes the ATP-dependent conversion of formylglycinamide ribonucleotide (FGAR) and glutamine to yield formylglycinamidine ribonucleotide (FGAM) and glutamate. The FGAM synthase complex is composed of three subunits. PurQ produces an ammonia molecule by converting glutamine to glutamate. PurL transfers the ammonia molecule to FGAR to form FGAM in an ATP-dependent manner. PurS interacts with PurQ and PurL and is thought to assist in the transfer of the ammonia molecule from PurQ to PurL. The polypeptide is Phosphoribosylformylglycinamidine synthase subunit PurL (Sulfurisphaera tokodaii (strain DSM 16993 / JCM 10545 / NBRC 100140 / 7) (Sulfolobus tokodaii)).